A 288-amino-acid chain; its full sequence is ATP synthase gamma chain (288 aa).

It belongs to the ATPase gamma chain family. As to quaternary structure, F-type ATPases have 2 components, CF(1) - the catalytic core - and CF(0) - the membrane proton channel. CF(1) has five subunits: alpha(3), beta(3), gamma(1), delta(1), epsilon(1). CF(0) has three main subunits: a, b and c.

Its subcellular location is the cell inner membrane. Its function is as follows. Produces ATP from ADP in the presence of a proton gradient across the membrane. The gamma chain is believed to be important in regulating ATPase activity and the flow of protons through the CF(0) complex. The chain is ATP synthase gamma chain from Paracidovorax citrulli (strain AAC00-1) (Acidovorax citrulli).